We begin with the raw amino-acid sequence, 1278 residues long: Cytoplasmic FMR1-interacting protein 2 (1278 aa).

N6-acetyllysine is present on Lys1062.

Belongs to the CYFIP family. Component of the WAVE1 complex composed of ABI2, CYFIP2, BRK1, NCKAP1 and WASF1/WAVE1. Interacts with FMR1, FXR1 and FXR2. Interacts with FMR1 isoform 6; the interaction occurs in a RNA-dependent manner. Interacts with RAC1 (activated form) which causes the complex to dissociate, releasing activated WASF1. The complex can also be activated by NCK1. Interacts with SHANK3; the interaction mediates the association of SHANK3 with the WAVE1 complex. Interacts with TMEM108 (via N-terminus); the interaction associates TMEM108 with the WAVE1 complex. In terms of tissue distribution, expressed in T-cells. Increased expression is observed in CD4(+) T-lymphocytes from patients with multiple sclerosis (at protein level).

Its subcellular location is the cytoplasm. It is found in the nucleus. The protein localises to the perinuclear region. It localises to the synapse. The protein resides in the synaptosome. Functionally, involved in T-cell adhesion and p53/TP53-dependent induction of apoptosis. Does not bind RNA. As component of the WAVE1 complex, required for BDNF-NTRK2 endocytic trafficking and signaling from early endosomes. In Homo sapiens (Human), this protein is Cytoplasmic FMR1-interacting protein 2.